We begin with the raw amino-acid sequence, 154 residues long: MLDAKKIATTVKDLVKPISDNLGFRLFDVEFKPENGWVLRIIIDKEGGVTIDDCEELSKRVSALLDVEDVITSSYFLEVSSPGLTRELKEKWHYEFFKGKYARLYLKEKIDNKQEYAGYIDSVEDDTLVLRLLDKTLKIPFDKIAKARLDVEKW.

It belongs to the RimP family.

It localises to the cytoplasm. Required for maturation of 30S ribosomal subunits. The protein is Ribosome maturation factor RimP of Hydrogenobaculum sp. (strain Y04AAS1).